The sequence spans 210 residues: Outer-membrane lipoprotein carrier protein (210 aa).

A signal peptide spans methionine 1–alanine 23.

It belongs to the LolA family. In terms of assembly, monomer.

It localises to the periplasm. In terms of biological role, participates in the translocation of lipoproteins from the inner membrane to the outer membrane. Only forms a complex with a lipoprotein if the residue after the N-terminal Cys is not an aspartate (The Asp acts as a targeting signal to indicate that the lipoprotein should stay in the inner membrane). This chain is Outer-membrane lipoprotein carrier protein, found in Xylella fastidiosa (strain Temecula1 / ATCC 700964).